Here is a 72-residue protein sequence, read N- to C-terminus: MSIFSSLSSLSTGSLKSSVSSIENGSSSGSFGSNETSGWGQHHWNSCHPCPPPRPICRPCPPCRPEPRCHRY.

The span at 1–38 (MSIFSSLSSLSTGSLKSSVSSIENGSSSGSFGSNETSG) shows a compositional bias: low complexity. The segment at 1–42 (MSIFSSLSSLSTGSLKSSVSSIENGSSSGSFGSNETSGWGQH) is disordered.

This is an uncharacterized protein from Dictyostelium discoideum (Social amoeba).